The primary structure comprises 268 residues: Ribosomal RNA small subunit methyltransferase A (268 aa).

S-adenosyl-L-methionine-binding residues include Asn-18, Leu-20, Gly-45, Glu-66, Asp-91, and Asn-112.

It belongs to the class I-like SAM-binding methyltransferase superfamily. rRNA adenine N(6)-methyltransferase family. RsmA subfamily.

The protein localises to the cytoplasm. It carries out the reaction adenosine(1518)/adenosine(1519) in 16S rRNA + 4 S-adenosyl-L-methionine = N(6)-dimethyladenosine(1518)/N(6)-dimethyladenosine(1519) in 16S rRNA + 4 S-adenosyl-L-homocysteine + 4 H(+). In terms of biological role, specifically dimethylates two adjacent adenosines (A1518 and A1519) in the loop of a conserved hairpin near the 3'-end of 16S rRNA in the 30S particle. May play a critical role in biogenesis of 30S subunits. In Shewanella putrefaciens (strain CN-32 / ATCC BAA-453), this protein is Ribosomal RNA small subunit methyltransferase A.